The chain runs to 217 residues: Tegument protein BKRF4 (217 aa).

Positions 1 to 217 (MAMFLKSRGV…GNNNYNWPWL (217 aa)) are disordered. Polar residues predominate over residues 32–42 (YTLGSQASQSI). Residues 43–79 (QEEDVSDTDESDYSDEDEEIDLEEEYPSDEDPSEGSD) show a composition bias toward acidic residues. Residues 63 to 64 (DL) are interaction with host histones H3/H4. The interval 81-84 (DPSW) is interaction with host H2A/H2B. Acidic residues predominate over residues 89 to 102 (SDESDYSESDEDEA). Over residues 106-132 (SQASRSSRVSPSTQQSSGLTPTPSFSR) the composition is skewed to low complexity. A compositionally biased stretch (pro residues) spans 136 to 145 (RAPPRPPAPA). Residues 208 to 217 (GNNNYNWPWL) are compositionally biased toward polar residues.

It belongs to the lymphocryptovirus BKRF4 family. As to quaternary structure, forms a complex with the host H3/H4 dimer and histone chaperone ASF1. Also forms a complex with host H2A/H2B dimer. Interacts (via C-terminus) with BGLF2; this interaction is important for infectious virion production.

It localises to the virion tegument. Its subcellular location is the host nucleus. It is found in the host cytoplasm. The protein localises to the host perinuclear region. Histone-binding protein that binds to histones H2A/H2B, H3/H4 and cellular chromatin to overcome the host DNA damage response triggered by the viral genome ends. Interferes with histone ubiquitination and recruitment of repair proteins. The chain is Tegument protein BKRF4 from Epstein-Barr virus (strain GD1) (HHV-4).